Here is a 565-residue protein sequence, read N- to C-terminus: Cytokinin dehydrogenase 2 (565 aa).

The signal sequence occupies residues 1 to 20 (MKQEQVRMAVLLMLNCFVKA). The N-linked (GlcNAc...) asparagine glycan is linked to asparagine 64. Residues 74 to 255 (RLAAAAAVLY…TRARIPLAPA (182 aa)) form the FAD-binding PCMH-type domain. 3 residues coordinate FAD: alanine 108, glycine 110, and glycine 112. Histidine 113 is subject to Pros-8alpha-FAD histidine. 7 residues coordinate FAD: serine 114, glutamine 118, aspartate 179, threonine 184, serine 190, isoleucine 194, and isoleucine 245. The N-linked (GlcNAc...) asparagine glycan is linked to asparagine 464. Tyrosine 517, serine 554, and glutamine 557 together coordinate FAD.

The protein belongs to the oxygen-dependent FAD-linked oxidoreductase family. As to quaternary structure, monomer. Requires FAD as cofactor. Glycosylated. In terms of tissue distribution, mostly expressed in leaves, culms, inflorescence meristems, and flowers, especially in vascular tissues.

Its subcellular location is the secreted. The protein resides in the extracellular space. It carries out the reaction N(6)-dimethylallyladenine + A + H2O = 3-methyl-2-butenal + adenine + AH2. Catalyzes the oxidation of cytokinins, a family of N(6)-substituted adenine derivatives that are plant hormones, where the substituent is an isopentenyl group. Is a major QTL involved in grain yield. Modulates the number of reproductive organs by regulating the cytokinin accumulation in inflorescence meristems. Acts as negative regulator of panicle branching. This Oryza sativa subsp. japonica (Rice) protein is Cytokinin dehydrogenase 2.